Consider the following 325-residue polypeptide: Inactive S-adenosylmethionine decarboxylase prozyme (325 aa).

This sequence belongs to the eukaryotic AdoMetDC family. Forms a heterodimer with S-adenosylmethionine decarboxylase AdoMetDC; heterodimerization is required to activate AdoMetDC.

The protein operates within amine and polyamine biosynthesis; S-adenosylmethioninamine biosynthesis; S-adenosylmethioninamine from S-adenosyl-L-methionine: step 1/1. Its function is as follows. Probably has no catalytic activity due to the loss of several residues required for processing and catalysis. Forms a complex with S-adenosylmethionine decarboxylase AdoMetDC which is essential to activate AdoMetDC. Required for the biosynthesis of the polyamine spermidine. Required for growth and survival during the bloodstream life cycle stage. The protein is Inactive S-adenosylmethionine decarboxylase prozyme of Trypanosoma brucei brucei.